A 1122-amino-acid polypeptide reads, in one-letter code: Adhesin P1 (1122 aa).

The first 26 residues, 1-26, serve as a signal peptide directing secretion; sequence MKKLIFKLSVGITPLALIGLGSFGLA. Disordered regions lie at residues 182–208, 244–273, and 541–562; these read ATGDTSAEGSATPAGGGSSSSAAGGGA, DYNSDQNKIPKPKTLLDSSESSESINGGRT, and GALQNSGNPQPTSTPMPNSNGN. The span at 195 to 208 shows a compositional bias: gly residues; the sequence is AGGGSSSSAAGGGA. The span at 259 to 273 shows a compositional bias: polar residues; the sequence is LDSSESSESINGGRT. Residues 1001-1021 traverse the membrane as a helical segment; it reads AISIPIIIIALALALGLGIGI. Residues 1066 to 1122 form a disordered region; it reads KTPQMLQANKKDGASSPSKPSAPAAKKPAGPTKPSAPGAKPTAPAKPKAPAPTKKIE. Low complexity predominate over residues 1079 to 1122; the sequence is ASSPSKPSAPAAKKPAGPTKPSAPGAKPTAPAKPKAPAPTKKIE.

Belongs to the adhesin P1 family.

Its subcellular location is the cell membrane. Functionally, could be involved in cytadherence. The sequence is that of Adhesin P1 (gapA) from Mycoplasmoides gallisepticum (strain R(low / passage 15 / clone 2)) (Mycoplasma gallisepticum).